The primary structure comprises 133 residues: Fatty acid-binding protein, heart (133 aa).

Val2 is modified (N-acetylvaline). Position 8 is a phosphothreonine (Thr8). A Phosphotyrosine; by Tyr-kinases modification is found at Tyr20. Residue Ser23 is modified to Phosphoserine. Thr30 bears the Phosphothreonine mark. A Phosphoserine modification is found at Ser83. 127–129 (RTY) is a binding site for (9Z)-octadecenoate. Hexadecanoate is bound at residue 127–129 (RTY). An octadecanoate-binding site is contributed by 127-129 (RTY).

Belongs to the calycin superfamily. Fatty-acid binding protein (FABP) family.

It localises to the cytoplasm. FABPs are thought to play a role in the intracellular transport of long-chain fatty acids and their acyl-CoA esters. This is Fatty acid-binding protein, heart (FABP3) from Homo sapiens (Human).